The primary structure comprises 215 residues: Glutathione S-transferase F10 (215 aa).

The 80-residue stretch at 2-81 (VLTIYAPLFA…YIAEKYRSQG (80 aa)) folds into the GST N-terminal domain. Glutathione is bound by residues 11-12 (AS), 39-40 (QR), 52-53 (KI), and 65-66 (ES). Residues 88–215 (TIEERGQVEQ…EVSAKYSLPV (128 aa)) enclose the GST C-terminal domain.

This sequence belongs to the GST superfamily. Phi family. Interacts with BAK1. In terms of tissue distribution, expressed in roots, stems, floral buds, mature flowers and leaves.

Its subcellular location is the cytoplasm. It localises to the cytosol. The catalysed reaction is RX + glutathione = an S-substituted glutathione + a halide anion + H(+). In terms of biological role, in vitro, possesses glutathione S-transferase activity toward 1-chloro-2,4-dinitrobenzene (CDNB) and benzyl isothiocyanate (BITC). May be involved in the conjugation of reduced glutathione to a wide number of exogenous and endogenous hydrophobic electrophiles and have a detoxification role against certain herbicides. In Arabidopsis thaliana (Mouse-ear cress), this protein is Glutathione S-transferase F10.